The chain runs to 400 residues: Phosphoglycerate kinase (400 aa).

Residues 23 to 25, Arg-38, 61 to 64, Arg-120, and Arg-153 each bind substrate; these read DLN and HFGR. ATP contacts are provided by residues Lys-203, Glu-325, and 355–358; that span reads GGDT.

It belongs to the phosphoglycerate kinase family. In terms of assembly, monomer.

The protein localises to the cytoplasm. It catalyses the reaction (2R)-3-phosphoglycerate + ATP = (2R)-3-phospho-glyceroyl phosphate + ADP. Its pathway is carbohydrate degradation; glycolysis; pyruvate from D-glyceraldehyde 3-phosphate: step 2/5. The chain is Phosphoglycerate kinase from Allorhizobium ampelinum (strain ATCC BAA-846 / DSM 112012 / S4) (Agrobacterium vitis (strain S4)).